Consider the following 541-residue polypeptide: Protein wntless homolog A (541 aa).

The N-terminal stretch at Met1 to Ala28 is a signal peptide. At Phe29–Met232 the chain is on the lumenal side. Residues Val233–Trp253 traverse the membrane as a helical segment. Topologically, residues Arg254–Lys268 are cytoplasmic. A helical transmembrane segment spans residues Val269–Ile289. Topologically, residues Gly290–Arg303 are lumenal. Residues Gln304–Met324 traverse the membrane as a helical segment. At Asp325–Arg331 the chain is on the cytoplasmic side. The chain crosses the membrane as a helical span at residues Ile332 to Phe352. Over Asp353–Met379 the chain is Lumenal. A helical membrane pass occupies residues Ala380–Val400. Over Tyr401–Arg431 the chain is Cytoplasmic. The helical transmembrane segment at Phe432–Thr452 threads the bilayer. The Lumenal portion of the chain corresponds to Thr453–Ser471. The helical transmembrane segment at Ala472–Tyr492 threads the bilayer. Over Ala493–Glu541 the chain is Cytoplasmic.

It belongs to the wntless family.

It localises to the golgi apparatus membrane. The protein resides in the cytoplasmic vesicle membrane. Its function is as follows. Required for a subset of Wnt-dependent developmental processes, in particular, eye and pronephros development. Regulates the secretion of wnt4, which is required for eye development. In Xenopus laevis (African clawed frog), this protein is Protein wntless homolog A (wls-a).